The primary structure comprises 457 residues: Hydrogenobyrinate a,c-diamide synthase (457 aa).

The 187-residue stretch at 255-441 (TVAIAAGRAF…LHTHPAATPG (187 aa)) folds into the GATase cobBQ-type domain. C337 functions as the Nucleophile in the catalytic mechanism.

This sequence belongs to the CobB/CbiA family. Requires Mg(2+) as cofactor.

It carries out the reaction hydrogenobyrinate + 2 L-glutamine + 2 ATP + 2 H2O = hydrogenobyrinate a,c-diamide + 2 L-glutamate + 2 ADP + 2 phosphate + 2 H(+). It functions in the pathway cofactor biosynthesis; adenosylcobalamin biosynthesis; cob(II)yrinate a,c-diamide from precorrin-2 (aerobic route): step 9/10. Its function is as follows. Catalyzes the ATP-dependent amidation of the two carboxylate groups at positions a and c of hydrogenobyrinate, using either L-glutamine or ammonia as the nitrogen source. This chain is Hydrogenobyrinate a,c-diamide synthase, found in Mycobacterium bovis (strain ATCC BAA-935 / AF2122/97).